Here is a 200-residue protein sequence, read N- to C-terminus: Holliday junction branch migration complex subunit RuvA (200 aa).

A domain I region spans residues 1–63 (MIGKLSGKID…EEHIHLYGFL (63 aa)). A domain II region spans residues 64–142 (TLEEKNFFNL…KIFSSSAIIK (79 aa)). The flexible linker stretch occupies residues 142–146 (KDSSN). A domain III region spans residues 147 to 200 (ISSVEINEVIKALVNLGFTRFEAQNTVQGIITQNTKISIDELIKTALKNRNSSF).

This sequence belongs to the RuvA family. In terms of assembly, homotetramer. Forms an RuvA(8)-RuvB(12)-Holliday junction (HJ) complex. HJ DNA is sandwiched between 2 RuvA tetramers; dsDNA enters through RuvA and exits via RuvB. An RuvB hexamer assembles on each DNA strand where it exits the tetramer. Each RuvB hexamer is contacted by two RuvA subunits (via domain III) on 2 adjacent RuvB subunits; this complex drives branch migration. In the full resolvosome a probable DNA-RuvA(4)-RuvB(12)-RuvC(2) complex forms which resolves the HJ.

It localises to the cytoplasm. In terms of biological role, the RuvA-RuvB-RuvC complex processes Holliday junction (HJ) DNA during genetic recombination and DNA repair, while the RuvA-RuvB complex plays an important role in the rescue of blocked DNA replication forks via replication fork reversal (RFR). RuvA specifically binds to HJ cruciform DNA, conferring on it an open structure. The RuvB hexamer acts as an ATP-dependent pump, pulling dsDNA into and through the RuvAB complex. HJ branch migration allows RuvC to scan DNA until it finds its consensus sequence, where it cleaves and resolves the cruciform DNA. This chain is Holliday junction branch migration complex subunit RuvA, found in Rickettsia typhi (strain ATCC VR-144 / Wilmington).